Consider the following 70-residue polypeptide: NAD(P)H-quinone oxidoreductase subunit O (70 aa).

It belongs to the complex I NdhO subunit family. As to quaternary structure, NDH-1 can be composed of about 15 different subunits; different subcomplexes with different compositions have been identified which probably have different functions.

The protein localises to the cellular thylakoid membrane. The catalysed reaction is a plastoquinone + NADH + (n+1) H(+)(in) = a plastoquinol + NAD(+) + n H(+)(out). It carries out the reaction a plastoquinone + NADPH + (n+1) H(+)(in) = a plastoquinol + NADP(+) + n H(+)(out). NDH-1 shuttles electrons from an unknown electron donor, via FMN and iron-sulfur (Fe-S) centers, to quinones in the respiratory and/or the photosynthetic chain. The immediate electron acceptor for the enzyme in this species is believed to be plastoquinone. Couples the redox reaction to proton translocation, and thus conserves the redox energy in a proton gradient. Cyanobacterial NDH-1 also plays a role in inorganic carbon-concentration. The polypeptide is NAD(P)H-quinone oxidoreductase subunit O (Trichormus variabilis (strain ATCC 29413 / PCC 7937) (Anabaena variabilis)).